A 275-amino-acid chain; its full sequence is NH(3)-dependent NAD(+) synthetase (275 aa).

Residue 46-53 coordinates ATP; sequence GISGGQDS. A Mg(2+)-binding site is contributed by aspartate 52. Deamido-NAD(+) is bound at residue arginine 141. An ATP-binding site is contributed by threonine 161. Glutamate 166 serves as a coordination point for Mg(2+). Lysine 174 and aspartate 181 together coordinate deamido-NAD(+). Residues lysine 190 and threonine 212 each coordinate ATP. 261–262 is a deamido-NAD(+) binding site; that stretch reads HK.

It belongs to the NAD synthetase family. Homodimer.

The catalysed reaction is deamido-NAD(+) + NH4(+) + ATP = AMP + diphosphate + NAD(+) + H(+). It functions in the pathway cofactor biosynthesis; NAD(+) biosynthesis; NAD(+) from deamido-NAD(+) (ammonia route): step 1/1. Its function is as follows. Catalyzes the ATP-dependent amidation of deamido-NAD to form NAD. Uses ammonia as a nitrogen source. This chain is NH(3)-dependent NAD(+) synthetase, found in Limosilactobacillus reuteri (strain DSM 20016) (Lactobacillus reuteri).